Here is a 910-residue protein sequence, read N- to C-terminus: DnaJ-like protein MG200 homolog (910 aa).

The J domain occupies 4 to 73 (AKRDYYEVLG…RANYDKYGHD (70 aa)). 3 disordered regions span residues 102 to 160 (DNLS…DDIP), 260 to 408 (TEPS…LEQD), and 451 to 486 (VLSD…STAP). Residues 111–121 (KKEKTKTKKKG) are compositionally biased toward basic residues. Over residues 273-283 (DSDAVTAATTV) the composition is skewed to low complexity. Over residues 357–379 (SDEADATNEPTEQDTISEPEQET) the composition is skewed to acidic residues. The span at 451 to 462 (VLSDQNPNPQTP) shows a compositional bias: polar residues.

The polypeptide is DnaJ-like protein MG200 homolog (Mycoplasma pneumoniae (strain ATCC 29342 / M129 / Subtype 1) (Mycoplasmoides pneumoniae)).